We begin with the raw amino-acid sequence, 274 residues long: NAD kinase (274 aa).

Residue aspartate 61 is the Proton acceptor of the active site. NAD(+) is bound by residues 61–62 (DG), lysine 66, 134–135 (ND), lysine 145, aspartate 164, and 175–180 (TAYSLS).

It belongs to the NAD kinase family. A divalent metal cation serves as cofactor.

It is found in the cytoplasm. The catalysed reaction is NAD(+) + ATP = ADP + NADP(+) + H(+). Functionally, involved in the regulation of the intracellular balance of NAD and NADP, and is a key enzyme in the biosynthesis of NADP. Catalyzes specifically the phosphorylation on 2'-hydroxyl of the adenosine moiety of NAD to yield NADP. This Clostridium tetani (strain Massachusetts / E88) protein is NAD kinase.